We begin with the raw amino-acid sequence, 643 residues long: Extracellular metalloproteinase 4 (643 aa).

The signal sequence occupies residues 1–18 (MHGLMLAGLLALPLSVLG). A propeptide spanning residues 19–254 (HPTESHSSGI…VHSVVDYVSA (236 aa)) is cleaved from the precursor. Positions 47–57 (TKSDAVPKQDG) are enriched in basic and acidic residues. Residues 47-73 (TKSDAVPKQDGESFTTSSTGNDNSSSG) are disordered. Residues 61 to 73 (TTSSTGNDNSSSG) show a composition bias toward low complexity. N-linked (GlcNAc...) asparagine glycans are attached at residues Asn-271 and Asn-420. Position 437 (His-437) interacts with Zn(2+). The active site involves Glu-438. His-441 contributes to the Zn(2+) binding site. N-linked (GlcNAc...) asparagine glycosylation is found at Asn-603 and Asn-629.

It belongs to the peptidase M36 family. The cofactor is Zn(2+).

It is found in the secreted. Functionally, secreted metalloproteinase probably acting as a virulence factor. The polypeptide is Extracellular metalloproteinase 4 (MEP4) (Trichophyton rubrum (Athlete's foot fungus)).